The sequence spans 482 residues: Catalase (482 aa).

Residues 1–11 (MNAMTNKTLTT) show a composition bias toward polar residues. The disordered stretch occupies residues 1-21 (MNAMTNKTLTTAAGAPVADNN). Catalysis depends on residues H57 and N130. Position 340 (Y340) interacts with heme.

This sequence belongs to the catalase family. As to quaternary structure, homodimer. Requires heme as cofactor.

The catalysed reaction is 2 H2O2 = O2 + 2 H2O. Functionally, decomposes hydrogen peroxide into water and oxygen; serves to protect cells from the toxic effects of hydrogen peroxide. This chain is Catalase (katA), found in Bordetella bronchiseptica (strain ATCC BAA-588 / NCTC 13252 / RB50) (Alcaligenes bronchisepticus).